The chain runs to 363 residues: Putative agmatine deiminase (363 aa).

The segment covering 1 to 10 (MTKQLSTSPK) has biased composition (polar residues). The interval 1-20 (MTKQLSTSPKQDGFRMPAEH) is disordered. The active-site Amidino-cysteine intermediate is the Cys355.

The protein belongs to the agmatine deiminase family.

The catalysed reaction is agmatine + H2O = N-carbamoylputrescine + NH4(+). This Photobacterium profundum (strain SS9) protein is Putative agmatine deiminase.